A 122-amino-acid polypeptide reads, in one-letter code: Phospholipase A2 nigroviriditoxin basic subunit B (122 aa).

Intrachain disulfides connect Cys26-Cys115, Cys28-Cys44, Cys43-Cys95, Cys49-Cys122, Cys50-Cys88, Cys57-Cys81, and Cys75-Cys86. Ca(2+) is bound by residues Tyr27, Gly29, and Gly31. Residue His47 is part of the active site. Position 48 (Asp48) interacts with Ca(2+). Residue Asp89 is part of the active site.

Belongs to the phospholipase A2 family. Group II subfamily. D49 sub-subfamily. As to quaternary structure, nigroviriditoxin is a heterodimer of an acidic subunit A and a basic subunit B. Ca(2+) is required as a cofactor. In terms of tissue distribution, expressed by the venom gland.

It is found in the secreted. It catalyses the reaction a 1,2-diacyl-sn-glycero-3-phosphocholine + H2O = a 1-acyl-sn-glycero-3-phosphocholine + a fatty acid + H(+). In terms of biological role, heterodimer A-B: Nigroviriditoxin possesses phospholipase A2 (PLA2) activity. It consists of a non-covalent association of a basic PLA2 subunit B with a non-enzymatic subunit A. Its function is as follows. Subunit B: Snake venom phospholipase A2 (PLA2) that induces myonecrosis in mice. PLA2 catalyzes the calcium-dependent hydrolysis of the 2-acyl groups in 3-sn-phosphoglycerides. The chain is Phospholipase A2 nigroviriditoxin basic subunit B from Bothriechis nigroviridis (Black-speckled palm pit viper).